A 107-amino-acid chain; its full sequence is Iron-binding protein IscA (107 aa).

Fe cation is bound by residues Cys35, Cys99, and Cys101.

This sequence belongs to the HesB/IscA family. In terms of assembly, homodimer; may form tetramers and higher multimers. Fe cation is required as a cofactor.

In terms of biological role, is able to transfer iron-sulfur clusters to apo-ferredoxin. Multiple cycles of [2Fe2S] cluster formation and transfer are observed, suggesting that IscA acts catalytically. Recruits intracellular free iron so as to provide iron for the assembly of transient iron-sulfur cluster in IscU in the presence of IscS, L-cysteine and the thioredoxin reductase system TrxA/TrxB. This chain is Iron-binding protein IscA, found in Serratia proteamaculans (strain 568).